Reading from the N-terminus, the 130-residue chain is Methylglyoxal synthase (130 aa).

In terms of domain architecture, MGS-like spans 1-130 (MSKPRIALIA…DLARNMQDVC (130 aa)). Substrate-binding positions include His-11, Lys-15, 37–40 (TGTT), and 57–58 (SG). The active-site Proton donor/acceptor is the Asp-63. His-90 serves as a coordination point for substrate.

It belongs to the methylglyoxal synthase family.

The enzyme catalyses dihydroxyacetone phosphate = methylglyoxal + phosphate. Its function is as follows. Catalyzes the formation of methylglyoxal from dihydroxyacetone phosphate. This is Methylglyoxal synthase from Burkholderia ambifaria (strain MC40-6).